The chain runs to 356 residues: UDP-N-acetylglucosamine--N-acetylmuramyl-(pentapeptide) pyrophosphoryl-undecaprenol N-acetylglucosamine transferase (356 aa).

Residues T14–G16, N126, R162, S190, I244, and Q289 each bind UDP-N-acetyl-alpha-D-glucosamine.

This sequence belongs to the glycosyltransferase 28 family. MurG subfamily.

Its subcellular location is the cell inner membrane. It carries out the reaction di-trans,octa-cis-undecaprenyl diphospho-N-acetyl-alpha-D-muramoyl-L-alanyl-D-glutamyl-meso-2,6-diaminopimeloyl-D-alanyl-D-alanine + UDP-N-acetyl-alpha-D-glucosamine = di-trans,octa-cis-undecaprenyl diphospho-[N-acetyl-alpha-D-glucosaminyl-(1-&gt;4)]-N-acetyl-alpha-D-muramoyl-L-alanyl-D-glutamyl-meso-2,6-diaminopimeloyl-D-alanyl-D-alanine + UDP + H(+). Its pathway is cell wall biogenesis; peptidoglycan biosynthesis. Its function is as follows. Cell wall formation. Catalyzes the transfer of a GlcNAc subunit on undecaprenyl-pyrophosphoryl-MurNAc-pentapeptide (lipid intermediate I) to form undecaprenyl-pyrophosphoryl-MurNAc-(pentapeptide)GlcNAc (lipid intermediate II). The sequence is that of UDP-N-acetylglucosamine--N-acetylmuramyl-(pentapeptide) pyrophosphoryl-undecaprenol N-acetylglucosamine transferase from Cupriavidus necator (strain ATCC 17699 / DSM 428 / KCTC 22496 / NCIMB 10442 / H16 / Stanier 337) (Ralstonia eutropha).